Here is a 463-residue protein sequence, read N- to C-terminus: Asparagine--tRNA ligase (463 aa).

It belongs to the class-II aminoacyl-tRNA synthetase family. Homodimer.

It is found in the cytoplasm. It carries out the reaction tRNA(Asn) + L-asparagine + ATP = L-asparaginyl-tRNA(Asn) + AMP + diphosphate + H(+). This Clostridium tetani (strain Massachusetts / E88) protein is Asparagine--tRNA ligase.